A 503-amino-acid polypeptide reads, in one-letter code: E3 ubiquitin-protein ligase ariadne-1 (503 aa).

A compositionally biased stretch (acidic residues) spans 1–11 (MDSDNDNDFCD). Residues 1–40 (MDSDNDNDFCDNVDSGNVSSGDDGDDDFGMEVDLPSSADR) form a disordered region. The segment covering 12-21 (NVDSGNVSSG) has biased composition (low complexity). The tract at residues 129 to 340 (QCEECEICFS…SSWYNCNRYD (212 aa)) is TRIAD supradomain. Cysteine 133, cysteine 136, cysteine 150, histidine 152, cysteine 155, cysteine 158, cysteine 178, cysteine 183, cysteine 223, cysteine 228, cysteine 244, cysteine 246, cysteine 251, cysteine 254, histidine 259, cysteine 264, cysteine 291, and cysteine 294 together coordinate Zn(2+). Residues 133 to 183 (CEICFSQLPPDSMAGLECGHRFCMPCWHEYLSTKIVAEGLGQTISCAAHGC) form an RING-type 1 zinc finger. The segment at 133 to 201 (CEICFSQLPP…VANLVTDARV (69 aa)) is important for interaction with Ubc10. Residues 203–264 (VKYQQLITNS…GENWHDPVKC (62 aa)) form an IBR-type zinc finger. Residues 291–322 (CPRCSVTIEKDGGCNHMVCKNQNCKNEFCWVC) form an RING-type 2; atypical zinc finger. Cysteine 304 is a catalytic residue. Zn(2+) contacts are provided by cysteine 309, cysteine 314, cysteine 319, cysteine 322, histidine 329, and cysteine 336. Residues 341 to 361 (EDEAKTARDAQEKLRSSLARY) adopt a coiled-coil conformation.

The protein belongs to the RBR family. Ariadne subfamily. Can form homodimers. Interacts (via RING-type 1 zinc finger) with Ubc10. Interacts with the LINC complex member koi. Interacts with park. Interacts with ari-2. Specifically interacts with isoform ECR-A of EcR. In terms of processing, autophosphorylated. Widely expressed, with prominent levels in the nervous system and female gonads.

Its subcellular location is the cytoplasm. It localises to the nucleus. It catalyses the reaction [E2 ubiquitin-conjugating enzyme]-S-ubiquitinyl-L-cysteine + [acceptor protein]-L-lysine = [E2 ubiquitin-conjugating enzyme]-L-cysteine + [acceptor protein]-N(6)-ubiquitinyl-L-lysine.. Its function is as follows. Atypical E3 ubiquitin-protein ligase, which catalyzes ubiquitination of target proteins together with ubiquitin-conjugating enzyme E2 Ubc10. Controls the subcellular localization and morphology of muscle nuclei (myonuclei) by regulating the protein levels and distribution of the LINC (LInker of Nucleoskeleton and Cytoskeleton) complex. Functions by mediating the monoubiquitination of the LINC complex subunit koi leading to its subsequent proteasomal degradation. Appears to function, at least partially redundantly, with the RBR E3 ligase family member park in nuclear localization and morphology. Likely to function in metamorphosis by regulating the proteins levels of EcR isoform A (ECR-A) and its heterodimeric partner usp, via the ubiquitination and subsequent degradation of ECR-A. In Drosophila melanogaster (Fruit fly), this protein is E3 ubiquitin-protein ligase ariadne-1.